The following is a 418-amino-acid chain: Tyrosine--tRNA ligase (418 aa).

Y34 provides a ligand contact to L-tyrosine. The 'HIGH' region motif lies at 39 to 48; it reads PTADSLHLGH. Residues Y169 and Q173 each contribute to the L-tyrosine site. The short motif at 229–233 is the 'KMSKS' region element; the sequence is KFGKS. K232 provides a ligand contact to ATP. In terms of domain architecture, S4 RNA-binding spans 352 to 418; it reads LNLVDMLVTA…GKKKYAVLTY (67 aa).

This sequence belongs to the class-I aminoacyl-tRNA synthetase family. TyrS type 1 subfamily. In terms of assembly, homodimer.

The protein localises to the cytoplasm. It catalyses the reaction tRNA(Tyr) + L-tyrosine + ATP = L-tyrosyl-tRNA(Tyr) + AMP + diphosphate + H(+). Functionally, catalyzes the attachment of tyrosine to tRNA(Tyr) in a two-step reaction: tyrosine is first activated by ATP to form Tyr-AMP and then transferred to the acceptor end of tRNA(Tyr). This is Tyrosine--tRNA ligase from Streptococcus pyogenes serotype M6 (strain ATCC BAA-946 / MGAS10394).